The sequence spans 507 residues: Fumarate hydratase, mitochondrial (507 aa).

A mitochondrion-targeting transit peptide spans 1–41 (MNRAFCLLARSRRFPRVPSAGAVLSGEAATLPRCAPNVVRM). Residues K58, K63, and K77 each carry the N6-acetyllysine; alternate modification. N6-succinyllysine; alternate is present on residues K58, K63, and K77. A Phosphothreonine modification is found at T82. The residue at position 91 (K91) is an N6-acetyllysine. K112 and K119 each carry N6-acetyllysine; alternate. Residues K112 and K119 each carry the N6-succinyllysine; alternate modification. Residues 142 to 144 (SGT), 173 to 176 (HPND), and 183 to 185 (SSN) contribute to the substrate site. N6-acetyllysine is present on K210. The residue at position 220 (K220) is an N6-acetyllysine; alternate. K220 carries the N6-succinyllysine; alternate modification. A substrate-binding site is contributed by T231. The active-site Proton donor/acceptor is the H232. T233 bears the Phosphothreonine mark. At K289 the chain carries N6-acetyllysine; alternate. K289 is subject to N6-succinyllysine; alternate. S362 is a catalytic residue. Substrate-binding positions include S363 and 368–370 (KVN). S363 bears the Phosphoserine mark. 2 positions are modified to N6-succinyllysine: K464 and K470. K499 is subject to N6-acetyllysine.

This sequence belongs to the class-II fumarase/aspartase family. Fumarase subfamily. In terms of assembly, homotetramer. Interacts with H2AZ1. In terms of processing, phosphorylation at Thr-233 by PRKDC in response to DNA damage promotes translocation to the nucleus and recruitment to DNA double-strand breaks (DSBs).

The protein resides in the mitochondrion. Its subcellular location is the cytoplasm. The protein localises to the cytosol. It is found in the nucleus. It localises to the chromosome. The catalysed reaction is (S)-malate = fumarate + H2O. The protein operates within carbohydrate metabolism; tricarboxylic acid cycle; (S)-malate from fumarate: step 1/1. In terms of biological role, catalyzes the reversible stereospecific interconversion of fumarate to L-malate. Experiments in other species have demonstrated that specific isoforms of this protein act in defined pathways and favor one direction over the other. Catalyzes the hydration of fumarate to L-malate in the tricarboxylic acid (TCA) cycle to facilitate a transition step in the production of energy in the form of NADH. Functionally, catalyzes the dehydration of L-malate to fumarate. Fumarate metabolism in the cytosol plays a role during urea cycle and arginine metabolism; fumarate being a by-product of the urea cycle and amino-acid catabolism. Also plays a role in DNA repair by promoting non-homologous end-joining (NHEJ). In response to DNA damage and phosphorylation by PRKDC, translocates to the nucleus and accumulates at DNA double-strand breaks (DSBs): acts by catalyzing formation of fumarate, an inhibitor of KDM2B histone demethylase activity, resulting in enhanced dimethylation of histone H3 'Lys-36' (H3K36me2). This chain is Fumarate hydratase, mitochondrial, found in Rattus norvegicus (Rat).